A 160-amino-acid polypeptide reads, in one-letter code: Large ribosomal subunit protein uL15 (160 aa).

A compositionally biased stretch (basic and acidic residues) spans 1–11 (MKLNELRDNHG). The interval 1-39 (MKLNELRDNHGARPKSKRLGRGIGSGKGKTSGKGVKGQK) is disordered. Over residues 21 to 35 (RGIGSGKGKTSGKGV) the composition is skewed to gly residues.

The protein belongs to the universal ribosomal protein uL15 family. Part of the 50S ribosomal subunit.

Binds to the 23S rRNA. This Granulibacter bethesdensis (strain ATCC BAA-1260 / CGDNIH1) protein is Large ribosomal subunit protein uL15.